Consider the following 424-residue polypeptide: MFGGDVSAASVLPSHPISGSCDGFQAEGSDHHHSTMTPFQESQRNVYQILYGHPANDDFPRPITPLQITIPEGDASPTVPVSCGVVNGKMHLNLFMCPGIHQPCIEVGNDLLSPKQFTIRGDKERQKDWKASIRVGRSSLRTHMEAMTIDFYEHMNRCSGKCQSRNYVNAPSEEVLQARKSKRTSEAGQLKYEIENEMAGKEADNDDNRKSAKKARGRPRGSVNKPRQMVKMEPQDDRFFEEFFIDAPPLQSMSSNEEPTSSNKESNECTPFNDILNCLQNDPMNFWSQMQQTGVIGHFCDDIIVSAINLKQSVMDNPVTPTTANMLTRTAFALGIPPVVVHRVQSIERNAYQQRKHDEMFNDIQSTLAEEHSVKYQPRTSSSSQESLHTAREFTEEKVEELIDVCKYDDYPESECLPGPSHIQ.

Positions 65 to 150 (PLQITIPEGD…RTHMEAMTID (86 aa)) constitute an SAND domain. Disordered regions lie at residues 178–228 (ARKS…KPRQ) and 371–394 (EHSV…AREF). The span at 192–210 (YEIENEMAGKEADNDDNRK) shows a compositional bias: basic and acidic residues. The span at 378-388 (PRTSSSSQESL) shows a compositional bias: polar residues.

Its subcellular location is the chromosome. The protein resides in the nucleus. Transcription factor which controls spermatogenesis and sperm cell fate by regulation of sperm gene expression. The polypeptide is Transcription regulator spe-44 (Caenorhabditis elegans).